Consider the following 517-residue polypeptide: DNA-binding protein Ikaros (517 aa).

Positions 1–71 (MDVDEGQDMS…QSDEENGRAC (71 aa)) are disordered. Position 13 is a phosphoserine (Ser13). Thr23 carries the phosphothreonine modification. Positions 37 to 47 (LSTTSGAQQNS) are enriched in polar residues. Lys58 is covalently cross-linked (Glycyl lysine isopeptide (Lys-Gly) (interchain with G-Cter in SUMO)). A phosphoserine mark is found at Ser63 and Ser101. A C2H2-type 1 zinc finger spans residues 117 to 139 (LKCDICGIVCIGPNVLMVHKRSH). Thr140 is subject to Phosphothreonine. The C2H2-type 2 zinc finger occupies 144 to 166 (FQCNQCGASFTQKGNLLRHIKLH). Residues 153-162 (FTQKGNLLRH) form a required for both high-affinity DNA binding and pericentromeric heterochromatin localization region. Ser167 bears the Phosphoserine mark. A C2H2-type 3 zinc finger spans residues 172–194 (FKCHLCNYACRRRDALTGHLRTH). Residues 179 to 194 (YACRRRDALTGHLRTH) form a required for both high-affinity DNA binding and pericentromeric heterochromatin localization region. Ser195 carries the phosphoserine modification. A C2H2-type 4 zinc finger spans residues 200–223 (HKCGYCGRSYKQRSSLEEHKERCH). A Glycyl lysine isopeptide (Lys-Gly) (interchain with G-Cter in SUMO) cross-link involves residue Lys239. A phosphoserine mark is found at Ser259, Ser287, Ser293, Ser357, Ser360, Ser384, Ser386, Ser388, and Ser392. The segment at 376–400 (SVSSEREASPSNSCQDSTDTESNAE) is disordered. Position 393 is a phosphothreonine (Thr393). A phosphoserine mark is found at Ser397 and Ser440. C2H2-type zinc fingers lie at residues 457 to 479 (YKCE…MGCH) and 488 to 512 (FECN…RGEH). The tract at residues 463–466 (RVLF) is required for binding PP1CC.

It belongs to the Ikaros C2H2-type zinc-finger protein family. Heterodimer with other IKAROS family members. Interacts with IKZF4 and IKZF5. Component of the chromatin-remodeling NuRD repressor complex which includes at least HDAC1, HDAC2, RBBP4, RBBP7, IKZF1, MTA2, MBD2, MBD3, MTA1L1, CHD3 and CHD4. Interacts directly with the CHD4 component of the NuRD complex. Interacts directly with SMARCA4; the interaction associates IKFZ1 with the BAF complex. Interacts with SUMO1; the interaction sumoylates IKAROS, promoted by PIAS2 and PIAS3. Interacts with PIAS2 (isoform alpha); the interaction promotes sumoylation and reduces transcription repression. Interacts, to a lesser extent, with PIAS3. Interacts with PPP1CC; the interaction targets PPP1CC to pericentromeric heterochromatin, dephosphorylates IKAROS, stabilizes it and prevents it from degradation. Interacts with IKZF3. Post-translationally, phosphorylation at Ser-357 and Ser-360 downstream of SYK induces nuclear translocation. Phosphorylation controls cell-cycle progression from late G(1) stage to S stage. Hyperphosphorylated during G2/M phase. Dephosphorylated state during late G(1) phase. Phosphorylation on Thr-140 is required for DNA and pericentromeric location during mitosis. CK2 is the main kinase, in vitro. GSK3 and CDK may also contribute to phosphorylation of the C-terminal serine and threonine residues. Phosphorylation on these C-terminal residues reduces the DNA-binding ability. Phosphorylation/dephosphorylation events on Ser-13 and Ser-293 regulate TDT expression during thymocyte differentiation. Dephosphorylation by protein phosphatase 1 regulates stability and pericentromeric heterochromatin location. Phosphorylated in both lymphoid and non-lymphoid tissues. Sumoylated. Simultaneous sumoylation on the 2 sites results in a loss of both HDAC-dependent and HDAC-independent repression. Has no effect on pericentromeric heterochromatin location. Desumoylated by SENP1. In terms of processing, polyubiquitinated. As to expression, strongly expressed in T-cells and their progenitors,in B-cells, and in all early embryonic retinal progenitor cells (RPCs). Isoforms V and VI are the predominant isoforms in lymphocytes.

Its subcellular location is the nucleus. The protein resides in the cytoplasm. In terms of biological role, transcription regulator of hematopoietic cell differentiation. Binds gamma-satellite DNA. Binds with higher affinity to gamma satellite A. Plays a role in the development of lymphocytes, B- and T-cells. Binds and activates the enhancer (delta-A element) of the CD3-delta gene. Repressor of the TDT (terminal deoxynucleotidyltransferase) gene during thymocyte differentiation. Regulates transcription through association with both HDAC-dependent and HDAC-independent complexes. Targets the 2 chromatin-remodeling complexes, NuRD and BAF (SWI/SNF), in a single complex (PYR complex), to the beta-globin locus in adult erythrocytes. Increases normal apoptosis in adult erythroid cells. Confers early temporal competence to retinal progenitor cells (RPCs). Function is isoform-specific and is modulated by dominant-negative inactive isoforms. This is DNA-binding protein Ikaros (Ikzf1) from Mus musculus (Mouse).